Here is a 547-residue protein sequence, read N- to C-terminus: Chaperonin GroEL (547 aa).

ATP contacts are provided by residues 30–33 (TLGP), K51, 87–91 (DGTTT), G415, and D496.

This sequence belongs to the chaperonin (HSP60) family. Forms a cylinder of 14 subunits composed of two heptameric rings stacked back-to-back. Interacts with the co-chaperonin GroES.

Its subcellular location is the cytoplasm. It catalyses the reaction ATP + H2O + a folded polypeptide = ADP + phosphate + an unfolded polypeptide.. In terms of biological role, together with its co-chaperonin GroES, plays an essential role in assisting protein folding. The GroEL-GroES system forms a nano-cage that allows encapsulation of the non-native substrate proteins and provides a physical environment optimized to promote and accelerate protein folding. This Pelodictyon phaeoclathratiforme (strain DSM 5477 / BU-1) protein is Chaperonin GroEL.